Consider the following 1333-residue polypeptide: DNA-directed RNA polymerase subunit beta' (1333 aa).

Cysteine 60, cysteine 62, cysteine 75, and cysteine 78 together coordinate Zn(2+). Mg(2+) contacts are provided by aspartate 535, aspartate 537, and aspartate 539. 4 residues coordinate Zn(2+): cysteine 901, cysteine 983, cysteine 990, and cysteine 993.

Belongs to the RNA polymerase beta' chain family. In terms of assembly, the RNAP catalytic core consists of 2 alpha, 1 beta, 1 beta' and 1 omega subunit. When a sigma factor is associated with the core the holoenzyme is formed, which can initiate transcription. Mg(2+) serves as cofactor. Requires Zn(2+) as cofactor.

It catalyses the reaction RNA(n) + a ribonucleoside 5'-triphosphate = RNA(n+1) + diphosphate. Its function is as follows. DNA-dependent RNA polymerase catalyzes the transcription of DNA into RNA using the four ribonucleoside triphosphates as substrates. This chain is DNA-directed RNA polymerase subunit beta', found in Corynebacterium glutamicum (strain R).